The chain runs to 631 residues: Phosphomethylpyrimidine synthase (631 aa).

Substrate-binding positions include N239, M268, Y297, H333, 353–355 (SRG), 394–397 (DGLR), and E433. Zn(2+) is bound at residue H437. Y460 is a binding site for substrate. A Zn(2+)-binding site is contributed by H501. C581, C584, and C589 together coordinate [4Fe-4S] cluster.

It belongs to the ThiC family. As to quaternary structure, homodimer. Requires [4Fe-4S] cluster as cofactor.

The catalysed reaction is 5-amino-1-(5-phospho-beta-D-ribosyl)imidazole + S-adenosyl-L-methionine = 4-amino-2-methyl-5-(phosphooxymethyl)pyrimidine + CO + 5'-deoxyadenosine + formate + L-methionine + 3 H(+). It participates in cofactor biosynthesis; thiamine diphosphate biosynthesis. Its function is as follows. Catalyzes the synthesis of the hydroxymethylpyrimidine phosphate (HMP-P) moiety of thiamine from aminoimidazole ribotide (AIR) in a radical S-adenosyl-L-methionine (SAM)-dependent reaction. The polypeptide is Phosphomethylpyrimidine synthase (Escherichia coli O6:K15:H31 (strain 536 / UPEC)).